The chain runs to 73 residues: Large ribosomal subunit protein bL31 (73 aa).

Belongs to the bacterial ribosomal protein bL31 family. Type A subfamily. As to quaternary structure, part of the 50S ribosomal subunit.

Its function is as follows. Binds the 23S rRNA. This chain is Large ribosomal subunit protein bL31, found in Agrobacterium fabrum (strain C58 / ATCC 33970) (Agrobacterium tumefaciens (strain C58)).